The primary structure comprises 349 residues: UDP-N-acetylenolpyruvoylglucosamine reductase (349 aa).

In terms of domain architecture, FAD-binding PCMH-type spans 25 to 197 (GIAARARFAA…VAVTFRLPKQ (173 aa)). Residue arginine 173 is part of the active site. The active-site Proton donor is the serine 249. The active site involves glutamate 345.

This sequence belongs to the MurB family. The cofactor is FAD.

Its subcellular location is the cytoplasm. It catalyses the reaction UDP-N-acetyl-alpha-D-muramate + NADP(+) = UDP-N-acetyl-3-O-(1-carboxyvinyl)-alpha-D-glucosamine + NADPH + H(+). It participates in cell wall biogenesis; peptidoglycan biosynthesis. Its function is as follows. Cell wall formation. This Burkholderia orbicola (strain MC0-3) protein is UDP-N-acetylenolpyruvoylglucosamine reductase.